We begin with the raw amino-acid sequence, 217 residues long: Small ribosomal subunit protein eS6 (217 aa).

The protein belongs to the eukaryotic ribosomal protein eS6 family. In terms of processing, phosphorylated.

The sequence is that of Small ribosomal subunit protein eS6 (RPS6) from Encephalitozoon cuniculi (strain GB-M1) (Microsporidian parasite).